The primary structure comprises 1067 residues: Hemoglobin and hemoglobin-haptoglobin-binding protein B (1067 aa).

An N-terminal signal peptide occupies residues 1-24; it reads MTNFKFSLLACSIAFALNASTAYA. A run of 6 repeats spans residues 26–29, 30–33, 34–37, 38–41, 42–45, and 46–49. Residues 26–49 form a 6 X 4 AA tandem repeats of Q-P-T-N region; sequence QPTNQPTNQPTNQPTNQPTNQPTN. Over residues 26–51 the composition is skewed to low complexity; that stretch reads QPTNQPTNQPTNQPTNQPTNQPTNQN. The segment at 26 to 53 is disordered; that stretch reads QPTNQPTNQPTNQPTNQPTNQPTNQNSN. The TonB box signature appears at 59–66; that stretch reads EQINVSGS. Residues 71–196 form the TBDR plug domain; the sequence is NIKEKKVGET…LGGSVIFETK (126 aa). The region spanning 204 to 1067 is the TBDR beta-barrel domain; sequence DKDYYLSYKR…NYRMSVQFEF (864 aa). Positions 1050–1067 match the TonB C-terminal box motif; it reads NRFYAPGRNYRMSVQFEF.

It belongs to the TonB-dependent receptor family. Hemoglobin/haptoglobin binding protein subfamily.

Its subcellular location is the cell outer membrane. Its function is as follows. Acts as a receptor for hemoglobin or the hemoglobin/haptoglobin complex of the human host and is required for heme uptake. This chain is Hemoglobin and hemoglobin-haptoglobin-binding protein B (hgbB), found in Haemophilus influenzae.